We begin with the raw amino-acid sequence, 583 residues long: Bifunctional lycopene cyclase/phytoene synthase (583 aa).

The tract at residues 1–243 (MGFDYALVHL…IVFGQLAFDN (243 aa)) is lycopene beta-cyclase. The next 7 helical transmembrane spans lie at 3–23 (FDYALVHLKYTIPPAVLLTWL), 35–55 (KVGYLVSIAVASTIPWDSYLI), 75–97 (IPLEEVFFFIIQTYNTSLLYLLL), 120–140 (YMRLAGQVFFLALIAWGWRCI), 151–171 (LILVWAGPFLLMLWSLAYQFI), 173–193 (ALPVTNTALPIFLPTLYLWVV), and 221–241 (IEEALFFLATNALIVFGQLAF). The phytoene synthase stretch occupies residues 250-583 (TFPHLFTGPS…MVAWRTLNSK (334 aa)).

The protein in the N-terminal section; belongs to the lycopene beta-cyclase family. In the C-terminal section; belongs to the phytoene/squalene synthase family.

The protein localises to the membrane. It catalyses the reaction all-trans-lycopene = gamma-carotene. The enzyme catalyses gamma-carotene = all-trans-beta-carotene. The catalysed reaction is 2 (2E,6E,10E)-geranylgeranyl diphosphate = 15-cis-phytoene + 2 diphosphate. It participates in carotenoid biosynthesis; beta-carotene biosynthesis. The protein operates within carotenoid biosynthesis; phytoene biosynthesis; all-trans-phytoene from geranylgeranyl diphosphate: step 1/1. Bifunctional enzyme that catalyzes the reactions from geranylgeranyl diphosphate to phytoene (phytoene synthase) and lycopene to beta-carotene via the intermediate gamma-carotene (lycopene cyclase). The polypeptide is Bifunctional lycopene cyclase/phytoene synthase (Pyrenophora tritici-repentis (strain Pt-1C-BFP) (Wheat tan spot fungus)).